Consider the following 379-residue polypeptide: Guanine nucleotide-binding protein G(s) subunit alpha (379 aa).

Residues 1-29 (MGCFGSAGAKGDAEENKKRKEANKNINKQ) form a disordered region. The N-palmitoyl glycine moiety is linked to residue G2. C3 carries S-palmitoyl cysteine lipidation. Residues 39–379 (ATHRLLLLGA…RMHLRQYELL (341 aa)) form the G-alpha domain. The segment at 42–55 (RLLLLGAGESGKST) is G1 motif. Residues 47 to 54 (GAGESGKS), 183 to 189 (LRCRVLT), 208 to 212 (DVGGQ), 277 to 280 (NKQD), and A351 each bind GTP. Mg(2+) contacts are provided by S54 and T189. The segment at 181–189 (DILRCRVLT) is G2 motif. The tract at residues 204 to 213 (FHMFDVGGQR) is G3 motif. The tract at residues 273 to 280 (ILFLNKQD) is G4 motif. The segment at 349 to 354 (TCAVDT) is G5 motif.

It belongs to the G-alpha family. G(s) subfamily. G proteins are composed of 3 units; alpha, beta and gamma. The alpha chain contains the guanine nucleotide binding site.

Functionally, guanine nucleotide-binding proteins (G proteins) are involved as modulators or transducers in various transmembrane signaling systems. The G(s) protein is involved in hormonal regulation of adenylate cyclase: it activates the cyclase in response to beta-adrenergic stimuli. The sequence is that of Guanine nucleotide-binding protein G(s) subunit alpha from Homarus americanus (American lobster).